The chain runs to 581 residues: DEAD-box ATP-dependent RNA helicase 22 (581 aa).

The short motif at 80–108 is the Q motif element; the sequence is VSWKSLGLSDNVSIALRDSGFDRPSLTQA. Residues 111–380 form the Helicase ATP-binding domain; that stretch reads IPSILSGKDV…GGILKHMFQD (270 aa). 124 to 131 serves as a coordination point for ATP; sequence AETGSGKT. The short motif at 244–247 is the DEAD box element; sequence DEAD. A Helicase C-terminal domain is found at 408 to 566; the sequence is QVDALIEAVK…GFRNKVKKRA (159 aa).

The protein belongs to the DEAD box helicase family.

It catalyses the reaction ATP + H2O = ADP + phosphate + H(+). The sequence is that of DEAD-box ATP-dependent RNA helicase 22 (RH22) from Arabidopsis thaliana (Mouse-ear cress).